We begin with the raw amino-acid sequence, 248 residues long: Tetraspanin-18 (248 aa).

Topologically, residues 1–13 (MEGDCLSCMKYLM) are cytoplasmic. A helical membrane pass occupies residues 14–34 (FVFNFFIFLGGACLLAIGIWV). Residues 35–49 (MVDPTGFREIVAANP) are Extracellular-facing. Residues 50–70 (LLLTGAYILLAMGGLLFLLGF) form a helical membrane-spanning segment. The Cytoplasmic segment spans residues 71–83 (LGCCGAVRENKCL). A helical membrane pass occupies residues 84-104 (LLFFFLFILIIFLAELSAAIL). The Extracellular segment spans residues 105 to 223 (AFIFRENLTR…TFETYVYLAG (119 aa)). N-linked (GlcNAc...) asparagine glycans are attached at residues Asn-111 and Asn-129. A helical transmembrane segment spans residues 224–244 (ALAIGVLAIELFAMIFAMCLF). The Cytoplasmic segment spans residues 245–248 (RGIQ).

This sequence belongs to the tetraspanin (TM4SF) family. As to quaternary structure, interacts with ORAI1; this interaction regulates ORAI1 exit from the endoplasmic (ER), and/or Golgi, and trafficking to the cell surface. As to expression, highly expressed in primary endothelial cells. Expressed in the embryo heart. Weakly expressed the embryo skeletal muscle.

It localises to the membrane. In terms of biological role, plays a role in the cell surface localization of ORAI1 and may participate in the regulation of Ca(2+) signaling and the VWF release in response to inflammatory stimuli. The sequence is that of Tetraspanin-18 from Homo sapiens (Human).